Consider the following 186-residue polypeptide: Ribosome-recycling factor (186 aa).

Belongs to the RRF family.

It is found in the cytoplasm. In terms of biological role, responsible for the release of ribosomes from messenger RNA at the termination of protein biosynthesis. May increase the efficiency of translation by recycling ribosomes from one round of translation to another. This Leptothrix cholodnii (strain ATCC 51168 / LMG 8142 / SP-6) (Leptothrix discophora (strain SP-6)) protein is Ribosome-recycling factor.